We begin with the raw amino-acid sequence, 580 residues long: Zinc finger CCCH domain-containing protein 47 (580 aa).

2 ANK repeats span residues 72–102 (EERT…DVNR) and 107–139 (ERVT…LVNS). 2 C3H1-type zinc fingers span residues 251-278 (PYTC…HGVF) and 286-310 (QYKT…HKRE). The disordered stretch occupies residues 421–451 (YVSSPSRNSQMGQNMNQHYPSSPVRQPPSQH).

Expressed in roots and anthers.

The protein resides in the nucleus. Its function is as follows. Involved in salt stress response. May positively modulate plant tolerance to salt stress. The sequence is that of Zinc finger CCCH domain-containing protein 47 from Arabidopsis thaliana (Mouse-ear cress).